The following is a 354-amino-acid chain: tRNA N6-adenosine threonylcarbamoyltransferase (354 aa).

Residues His-115 and His-119 each contribute to the Fe cation site. Substrate is bound by residues Leu-138–Gly-142, Asp-171, Gly-184, and Asn-276. Residue Asp-304 participates in Fe cation binding.

Belongs to the KAE1 / TsaD family. It depends on Fe(2+) as a cofactor.

It localises to the cytoplasm. The enzyme catalyses L-threonylcarbamoyladenylate + adenosine(37) in tRNA = N(6)-L-threonylcarbamoyladenosine(37) in tRNA + AMP + H(+). Functionally, required for the formation of a threonylcarbamoyl group on adenosine at position 37 (t(6)A37) in tRNAs that read codons beginning with adenine. Is involved in the transfer of the threonylcarbamoyl moiety of threonylcarbamoyl-AMP (TC-AMP) to the N6 group of A37, together with TsaE and TsaB. TsaD likely plays a direct catalytic role in this reaction. This Xanthomonas oryzae pv. oryzae (strain MAFF 311018) protein is tRNA N6-adenosine threonylcarbamoyltransferase.